A 164-amino-acid chain; its full sequence is CASP-like protein 1C2 (164 aa).

The Cytoplasmic portion of the chain corresponds to 1-8 (MAVELKKV). A helical membrane pass occupies residues 9–29 (FSTILRFLALAATVVAVIVMI). The Extracellular segment spans residues 30-53 (RSHDSAIVLNLTFSAKYNNTPAFK). Asn39 carries an N-linked (GlcNAc...) asparagine glycan. A helical transmembrane segment spans residues 54-74 (YFVIAEGIASVYTIIVIFLWS). Residues 75–80 (KGLLGR) lie on the Cytoplasmic side of the membrane. A helical membrane pass occupies residues 81–101 (LIVILDMVTTVLLTSSISAAL). Residues 102-129 (AIAQVGKKGNSHAGWLPVCGQVPKFCDQ) lie on the Extracellular side of the membrane. Residues 130–150 (AIIALVAGFVAAIVYFMLLLC) traverse the membrane as a helical segment. Residues 151–164 (SLHAVLTPIFAVKP) are Cytoplasmic-facing.

The protein belongs to the Casparian strip membrane proteins (CASP) family. As to quaternary structure, homodimer and heterodimers.

The protein resides in the cell membrane. In Ricinus communis (Castor bean), this protein is CASP-like protein 1C2.